The sequence spans 244 residues: Small ribosomal subunit protein uS3 (244 aa).

Residues 39–107 enclose the KH type-2 domain; that stretch reads IRELIKKESF…KLIINVEEIK (69 aa). The tract at residues 216-244 is disordered; sequence LPVYKNKKNDKNKKRRNNNRKGKSQAAKN. A compositionally biased stretch (basic residues) spans 220-238; that stretch reads KNKKNDKNKKRRNNNRKGK.

The protein belongs to the universal ribosomal protein uS3 family. As to quaternary structure, part of the 30S ribosomal subunit. Forms a tight complex with proteins S10 and S14.

Binds the lower part of the 30S subunit head. Binds mRNA in the 70S ribosome, positioning it for translation. In Finegoldia magna (strain ATCC 29328 / DSM 20472 / WAL 2508) (Peptostreptococcus magnus), this protein is Small ribosomal subunit protein uS3.